The chain runs to 562 residues: Probable sesquiterpene synthase (562 aa).

Residues aspartate 315, aspartate 319, and glutamate 467 each coordinate Mg(2+). A DDXXD motif motif is present at residues 315–319 (DDIYD).

Belongs to the terpene synthase family. Tpsa subfamily. Mg(2+) is required as a cofactor. Mn(2+) serves as cofactor.

Its function is as follows. Sesquiterpene synthase. The protein is Probable sesquiterpene synthase (SesquiTPS) of Santalum austrocaledonicum (Sandalwood).